The following is a 1364-amino-acid chain: DNA-directed RNA polymerase subunit beta' (1364 aa).

Residues C250, C317, C324, and C327 each contribute to the Zn(2+) site. The tract at residues 1318-1342 (TRHNIDPSASTNAAFTRPDVDNELK) is disordered.

Belongs to the RNA polymerase beta' chain family. RpoC2 subfamily. In cyanobacteria the RNAP catalytic core is composed of 2 alpha, 1 beta, 1 beta', 1 gamma and 1 omega subunit. When a sigma factor is associated with the core the holoenzyme is formed, which can initiate transcription. It depends on Zn(2+) as a cofactor.

It catalyses the reaction RNA(n) + a ribonucleoside 5'-triphosphate = RNA(n+1) + diphosphate. Functionally, DNA-dependent RNA polymerase catalyzes the transcription of DNA into RNA using the four ribonucleoside triphosphates as substrates. The polypeptide is DNA-directed RNA polymerase subunit beta' (Synechococcus sp. (strain CC9902)).